The chain runs to 185 residues: AP-3 complex subunit sigma (185 aa).

It belongs to the adaptor complexes small subunit family. In terms of assembly, adaptor protein complex 3 (AP-3) is a heterotetramer composed of 2 large adaptins (APL5 and APL6), a medium adaptin (APM3) and a small adaptin (APS3).

The protein resides in the golgi apparatus. It is found in the cytoplasmic vesicle membrane. Its function is as follows. Part of the AP-3 complex, an adaptor-related complex which is not clathrin-associated. The complex is associated with the Golgi region as well as more peripheral structures. It facilitates the budding of vesicles from the Golgi membrane and may be directly involved in trafficking to the vacuole. This Eremothecium gossypii (strain ATCC 10895 / CBS 109.51 / FGSC 9923 / NRRL Y-1056) (Yeast) protein is AP-3 complex subunit sigma (APS3).